A 298-amino-acid chain; its full sequence is Keratin-associated protein 10-11 (298 aa).

Tandem repeats lie at residues 26–30 (CCEPP), 36–40 (CCAPA), 57–61 (CCQAA), 79–83 (CCQQS), 89–93 (CCTSS), 99–103 (CCVPV), 104–108 (CCKTV), 109–113 (CCKPV), 114–118 (CCVPV), 119–123 (CCGAA), 126–130 (CCRQS), 136–140 (CCASS), 146–150 (CCVPV), 151–155 (CCKPV), 156–160 (CCVST), 168–172 (CCQQS), 178–182 (CCTSS), 188–192 (CCVPV), 193–197 (CCKTV), 203–207 (CCVPV), 225–229 (CCTTS), 230–234 (CCRPS), 249–253 (CCVPV), 256–260 (CCAPT), and 267–271 (CCRPA). Residues 26-271 (CCEPPCSAPS…SCQSSCCRPA (246 aa)) form a 25 X 5 AA repeats of C-C-X(3) region.

The protein belongs to the KRTAP type 10 family. As to quaternary structure, interacts with hair keratins. In terms of tissue distribution, restricted to a narrow region of the hair fiber cuticle, lying approximately 20 cell layers above the apex of the dermal papilla of the hair root; not detected in any other tissues.

In terms of biological role, in the hair cortex, hair keratin intermediate filaments are embedded in an interfilamentous matrix, consisting of hair keratin-associated proteins (KRTAP), which are essential for the formation of a rigid and resistant hair shaft through their extensive disulfide bond cross-linking with abundant cysteine residues of hair keratins. The matrix proteins include the high-sulfur and high-glycine-tyrosine keratins. The polypeptide is Keratin-associated protein 10-11 (KRTAP10-11) (Homo sapiens (Human)).